We begin with the raw amino-acid sequence, 384 residues long: Flap endonuclease 1 (384 aa).

The tract at residues 1-105 is N-domain; the sequence is MGIKKLTDLI…GELAKRQARR (105 aa). Mg(2+) is bound at residue Asp34. Position 71 (Arg71) interacts with DNA. Residues Asp87, Glu159, Glu161, Asp180, and Asp182 each coordinate Mg(2+). The tract at residues 123 to 254 is I-domain; sequence EVQKFAKRVI…KRAIELIQKH (132 aa). Glu159 is a DNA binding site. DNA-binding residues include Gly232 and Asp234. Asp234 provides a ligand contact to Mg(2+). An interaction with PCNA region spans residues 338-346; it reads VQSRMDSFI. Positions 349-384 are disordered; sequence IKKPEDPNDKKKKVTKTPSKPSAKTSKKSSSTFKRK. Over residues 364–384 the composition is skewed to low complexity; it reads KTPSKPSAKTSKKSSSTFKRK.

This sequence belongs to the XPG/RAD2 endonuclease family. FEN1 subfamily. Interacts with PCNA. Three molecules of repg bind to one PCNA trimer with each molecule binding to one PCNA monomer. PCNA stimulates the nuclease activity without altering cleavage specificity. The cofactor is Mg(2+). Post-translationally, phosphorylated. Phosphorylation upon DNA damage induces relocalization to the nuclear plasma.

The protein localises to the nucleus. It localises to the nucleolus. The protein resides in the nucleoplasm. It is found in the mitochondrion. Structure-specific nuclease with 5'-flap endonuclease and 5'-3' exonuclease activities involved in DNA replication and repair. During DNA replication, cleaves the 5'-overhanging flap structure that is generated by displacement synthesis when DNA polymerase encounters the 5'-end of a downstream Okazaki fragment. It enters the flap from the 5'-end and then tracks to cleave the flap base, leaving a nick for ligation. Also involved in the long patch base excision repair (LP-BER) pathway, by cleaving within the apurinic/apyrimidinic (AP) site-terminated flap. Acts as a genome stabilization factor that prevents flaps from equilibrating into structures that lead to duplications and deletions. Also possesses 5'-3' exonuclease activity on nicked or gapped double-stranded DNA, and exhibits RNase H activity. Also involved in replication and repair of rDNA and in repairing mitochondrial DNA. The chain is Flap endonuclease 1 from Dictyostelium discoideum (Social amoeba).